Consider the following 255-residue polypeptide: CD320 antigen (255 aa).

The first 29 residues, 1–29 (MNGWVARGLARRAAALGLGLRVLLCFGLC), serve as a signal peptide directing secretion. The Extracellular portion of the chain corresponds to 30–203 (LEIAPTPIQT…SVQSGNRNVY (174 aa)). LDL-receptor class A domains lie at 52-89 (SCPP…EECG) and 120-157 (SCPE…LGCG). Cystine bridges form between Cys-53-Cys-66, Cys-60-Cys-79, Cys-73-Cys-88, Cys-121-Cys-134, Cys-128-Cys-147, and Cys-141-Cys-156. Trp-71, Asp-74, Asp-76, Asp-78, Asp-84, and Glu-85 together coordinate Ca(2+). Residues Trp-139, Asp-142, His-144, Asp-146, Asp-152, and Glu-153 each coordinate Ca(2+). N-linked (GlcNAc...) asparagine glycosylation is found at Asn-177 and Asn-183. A helical transmembrane segment spans residues 204–224 (GIIAAVAVLSISLAAGILFAL). At 225–255 (SRLCAQGCLAPLGLLVSMKGSLQPEKKTSVL) the chain is on the cytoplasmic side.

In terms of assembly, interacts (via LDL-receptor class A domains) with TCN2.

The protein localises to the cell membrane. Functionally, receptor for transcobalamin saturated with cobalamin (TCbl). Plays an important role in cobalamin uptake. Plasma membrane protein that is expressed on follicular dendritic cells (FDC) and mediates interaction with germinal center B cells. Functions as a costimulator to promote B cell responses to antigenic stimuli; promotes B cell differentiation and proliferation. Germinal center-B (GC-B) cells differentiate into memory B-cells and plasma cells (PC) through interaction with T-cells and follicular dendritic cells (FDC). CD320 augments the proliferation of PC precursors generated by IL-10. This Bos taurus (Bovine) protein is CD320 antigen (CD320).